A 320-amino-acid chain; its full sequence is Cytochrome f (320 aa).

The signal sequence occupies residues 1 to 35 (MQNRNTFSWVKEQMTRSIFVSMMIYIITRASISNA). Heme is bound by residues Y36, C56, C59, and H60. A helical transmembrane segment spans residues 286–306 (IQGLFLFLASVILAQIFLVLK).

Belongs to the cytochrome f family. In terms of assembly, the 4 large subunits of the cytochrome b6-f complex are cytochrome b6, subunit IV (17 kDa polypeptide, petD), cytochrome f and the Rieske protein, while the 4 small subunits are PetG, PetL, PetM and PetN. The complex functions as a dimer. Heme serves as cofactor.

The protein resides in the plastid. The protein localises to the chloroplast thylakoid membrane. Its function is as follows. Component of the cytochrome b6-f complex, which mediates electron transfer between photosystem II (PSII) and photosystem I (PSI), cyclic electron flow around PSI, and state transitions. The polypeptide is Cytochrome f (Amborella trichopoda).